Consider the following 351-residue polypeptide: Pinopsin (351 aa).

At 1-30 (MSSNSSQAPPNGTPGPFDGPQWPYQAPQST) the chain is on the extracellular side. The N-linked (GlcNAc...) asparagine glycan is linked to Asn-4. The chain crosses the membrane as a helical span at residues 31–55 (YVGVAVLMGTVVACASVVNGLVIVV). Residues 56 to 67 (SICYKKLRSPLN) are Cytoplasmic-facing. A helical transmembrane segment spans residues 68–92 (YILVNLAVADLLVTLCGSSVSLSNN). Topologically, residues 93–107 (INGFFVFGRRMCELE) are extracellular. Cys-104 and Cys-181 are oxidised to a cystine. Residues 108-127 (GFMVSLTGIVGLWSLAILAL) traverse the membrane as a helical segment. Residues 128–146 (ERYVVVCKPLGDFQFQRRH) are Cytoplasmic-facing. Residues 147 to 170 (AVSGCAFTWGWALLWSAPPLLGWS) traverse the membrane as a helical segment. At 171 to 194 (SYVPEGLRTSCGPNWYTGGSNNNS) the chain is on the extracellular side. An N-linked (GlcNAc...) asparagine glycan is attached at Asn-192. The helical transmembrane segment at 195–222 (YILSLFVTCFVLPLSLILFSYTNLLLTL) threads the bilayer. At 223 to 244 (RAAAAQQKEADTTQRAEREVTR) the chain is on the cytoplasmic side. Residues 245-268 (MVIVMVMAFLLCWLPYSTFALVVA) form a helical membrane-spanning segment. Residues 269-276 (THKGIIIQ) lie on the Extracellular side of the membrane. Residues 277 to 301 (PVLASLPSYFSKTATVYNPIIYVFM) form a helical membrane-spanning segment. Lys-288 is modified (N6-(retinylidene)lysine). The Cytoplasmic portion of the chain corresponds to 302 to 351 (NKQFQSCLLEMLCCGYQPQRTGKASPGTPGPHADVTAAGLRNKVMPAHPV). Residues Cys-314 and Cys-315 are each lipidated (S-palmitoyl cysteine).

Belongs to the G-protein coupled receptor 1 family. Opsin subfamily. In terms of processing, phosphorylated on some or all of the serine and threonine residues present in the C-terminal region. Pineal gland.

Its subcellular location is the membrane. Functionally, produces a slow and prolonged phototransduction response consistent with the non-visual function of pineal photoreception. The chain is Pinopsin from Gallus gallus (Chicken).